Reading from the N-terminus, the 388-residue chain is Proteasomal ubiquitin receptor ADRM1 homolog rpn1302 (388 aa).

Residues 15–132 (RGKYGLVSVK…SLINQLIADP (118 aa)) enclose the Pru domain. Disordered regions lie at residues 202-227 (RASSESNLNGPHATAGENGEDHEEAT) and 368-388 (SDGEVEEEGDVEMRESNEKDE). Residues 368-377 (SDGEVEEEGD) show a composition bias toward acidic residues. Residues 378 to 388 (VEMRESNEKDE) are compositionally biased toward basic and acidic residues.

This sequence belongs to the ADRM1 family. As to quaternary structure, component of the 19S proteasome regulatory particle complex. The 2 S.pombe rpn13 homologs, rpn1301 and rpn1302 are present at a 0.2-1 ratio.

It localises to the cytoplasm. The protein resides in the nucleus. Component of the 26S proteasome, a multiprotein complex involved in the ATP-dependent degradation of ubiquitinated proteins. This complex plays a key role in the maintenance of protein homeostasis by removing misfolded or damaged proteins, which could impair cellular functions, and by removing proteins whose functions are no longer required. Therefore, the proteasome participates in numerous cellular processes, including cell cycle progression, apoptosis, or DNA damage repair. Within the complex, functions as a proteasomal ubiquitin receptor. The sequence is that of Proteasomal ubiquitin receptor ADRM1 homolog rpn1302 (rpn1302) from Schizosaccharomyces pombe (strain 972 / ATCC 24843) (Fission yeast).